The following is a 201-amino-acid chain: IMP cyclohydrolase (201 aa).

This sequence belongs to the archaeal IMP cyclohydrolase family.

The enzyme catalyses IMP + H2O = 5-formamido-1-(5-phospho-D-ribosyl)imidazole-4-carboxamide. It participates in purine metabolism; IMP biosynthesis via de novo pathway; IMP from 5-formamido-1-(5-phospho-D-ribosyl)imidazole-4-carboxamide: step 1/1. Catalyzes the cyclization of 5-formylamidoimidazole-4-carboxamide ribonucleotide to IMP. This is IMP cyclohydrolase from Methanococcus maripaludis (strain C7 / ATCC BAA-1331).